Consider the following 162-residue polypeptide: SsrA-binding protein (162 aa).

Belongs to the SmpB family.

The protein localises to the cytoplasm. Its function is as follows. Required for rescue of stalled ribosomes mediated by trans-translation. Binds to transfer-messenger RNA (tmRNA), required for stable association of tmRNA with ribosomes. tmRNA and SmpB together mimic tRNA shape, replacing the anticodon stem-loop with SmpB. tmRNA is encoded by the ssrA gene; the 2 termini fold to resemble tRNA(Ala) and it encodes a 'tag peptide', a short internal open reading frame. During trans-translation Ala-aminoacylated tmRNA acts like a tRNA, entering the A-site of stalled ribosomes, displacing the stalled mRNA. The ribosome then switches to translate the ORF on the tmRNA; the nascent peptide is terminated with the 'tag peptide' encoded by the tmRNA and targeted for degradation. The ribosome is freed to recommence translation, which seems to be the essential function of trans-translation. The polypeptide is SsrA-binding protein (Sorangium cellulosum (strain So ce56) (Polyangium cellulosum (strain So ce56))).